We begin with the raw amino-acid sequence, 442 residues long: Tol-Pal system protein TolB (442 aa).

A signal peptide spans Met-1 to Ala-26.

This sequence belongs to the TolB family. In terms of assembly, the Tol-Pal system is composed of five core proteins: the inner membrane proteins TolA, TolQ and TolR, the periplasmic protein TolB and the outer membrane protein Pal. They form a network linking the inner and outer membranes and the peptidoglycan layer.

The protein resides in the periplasm. Functionally, part of the Tol-Pal system, which plays a role in outer membrane invagination during cell division and is important for maintaining outer membrane integrity. The sequence is that of Tol-Pal system protein TolB from Nitratidesulfovibrio vulgaris (strain ATCC 29579 / DSM 644 / CCUG 34227 / NCIMB 8303 / VKM B-1760 / Hildenborough) (Desulfovibrio vulgaris).